The primary structure comprises 261 residues: tRNA pseudouridine synthase A (261 aa).

Catalysis depends on Asp51, which acts as the Nucleophile. Tyr109 provides a ligand contact to substrate.

Belongs to the tRNA pseudouridine synthase TruA family. In terms of assembly, homodimer.

The enzyme catalyses uridine(38/39/40) in tRNA = pseudouridine(38/39/40) in tRNA. Functionally, formation of pseudouridine at positions 38, 39 and 40 in the anticodon stem and loop of transfer RNAs. The polypeptide is tRNA pseudouridine synthase A (Shewanella baltica (strain OS155 / ATCC BAA-1091)).